A 357-amino-acid polypeptide reads, in one-letter code: MIKNLSNMKNDNQKREKCCEYIEALEEERRKINVFQRELPLCVELVTQAIEAYKREISGTSTDNLYGQSECSEQTTGECGRILDLFIPIKHSSTSIEEEVDDKDDDDEEHQSHETDIDFDDKNMKSEWLKSVQLWNQSDAVVSNNRQDRSQEKTETLVELIKINDEAAKKNNNIKSPVTTSDGGSGGGGGRRGQRKNRRCWSQELHRRFLNALKQLGGPHVATPKQIRDIMKVDGLTNDEVKSHLQKYRLHARRPSQTTPNNRNSQTQHFVVVGGIWVPQTNHSTANAVNAVASGETTGIYGPMVSSLPSEWPRHSNFGRKISEDRSRCSNNGFFRCSSPAMSCSTRTKTKDAKIIS.

Disordered regions lie at residues 94–117 (TSIE…ETDI) and 171–198 (NNNI…RKNR). Residues 96-109 (IEEEVDDKDDDDEE) are compositionally biased toward acidic residues. Over residues 171-182 (NNNIKSPVTTSD) the composition is skewed to polar residues. Residues 193–253 (GQRKNRRCWS…HLQKYRLHAR (61 aa)) enclose the HTH myb-type domain. A DNA-binding region (H-T-H motif) is located at residues 224-249 (PKQIRDIMKVDGLTNDEVKSHLQKYR).

The protein localises to the nucleus. Its function is as follows. Probable factor involved in nitrate and phosphate signaling in roots. Integrates nitrate and phosphate starvation responses and adaptation of root architecture, depending on nutrient availabilities. Acts downstream of the nitrate sensor and transporter NPF6.3/NRT1.1. Represses primary root development in response to phosphate deficiency conditions, only when nitrate is present. This chain is Transcription factor HHO1, found in Arabidopsis thaliana (Mouse-ear cress).